A 287-amino-acid polypeptide reads, in one-letter code: 4-diphosphocytidyl-2-C-methyl-D-erythritol kinase (287 aa).

Lys-10 is an active-site residue. Residue 92–102 participates in ATP binding; the sequence is PLAAGLAGGSA. Asp-134 is a catalytic residue.

Belongs to the GHMP kinase family. IspE subfamily.

The enzyme catalyses 4-CDP-2-C-methyl-D-erythritol + ATP = 4-CDP-2-C-methyl-D-erythritol 2-phosphate + ADP + H(+). The protein operates within isoprenoid biosynthesis; isopentenyl diphosphate biosynthesis via DXP pathway; isopentenyl diphosphate from 1-deoxy-D-xylulose 5-phosphate: step 3/6. Functionally, catalyzes the phosphorylation of the position 2 hydroxy group of 4-diphosphocytidyl-2C-methyl-D-erythritol. This is 4-diphosphocytidyl-2-C-methyl-D-erythritol kinase from Caldanaerobacter subterraneus subsp. tengcongensis (strain DSM 15242 / JCM 11007 / NBRC 100824 / MB4) (Thermoanaerobacter tengcongensis).